The following is a 122-amino-acid chain: Large ribosomal subunit protein uL14c (122 aa).

This sequence belongs to the universal ribosomal protein uL14 family. As to quaternary structure, part of the 50S ribosomal subunit.

The protein resides in the plastid. Its subcellular location is the chloroplast. Its function is as follows. Binds to 23S rRNA. This Cryptomeria japonica (Japanese cedar) protein is Large ribosomal subunit protein uL14c.